We begin with the raw amino-acid sequence, 61 residues long: MAKTSQKVRNHRPAKFSSREYTRCERCGRPHSVYRKFGLCRICLKELGHKGQIPGLKKASW.

Positions 1-14 are enriched in basic residues; the sequence is MAKTSQKVRNHRPA. The segment at 1-20 is disordered; sequence MAKTSQKVRNHRPAKFSSRE. Residues Cys24, Cys27, Cys40, and Cys43 each contribute to the Zn(2+) site.

The protein belongs to the universal ribosomal protein uS14 family. Zinc-binding uS14 subfamily. As to quaternary structure, part of the 30S ribosomal subunit. Contacts proteins S3 and S10. It depends on Zn(2+) as a cofactor.

In terms of biological role, binds 16S rRNA, required for the assembly of 30S particles and may also be responsible for determining the conformation of the 16S rRNA at the A site. This is Small ribosomal subunit protein uS14 from Lactobacillus delbrueckii subsp. bulgaricus (strain ATCC 11842 / DSM 20081 / BCRC 10696 / JCM 1002 / NBRC 13953 / NCIMB 11778 / NCTC 12712 / WDCM 00102 / Lb 14).